Consider the following 399-residue polypeptide: Protochlorophyllide reductase, chloroplastic (399 aa).

Residues 1–64 constitute a chloroplast transit peptide; it reads MALQTASMLP…RQKVGAVRAE (64 aa).

The protein belongs to the short-chain dehydrogenases/reductases (SDR) family. POR subfamily.

The protein resides in the plastid. It is found in the chloroplast. The enzyme catalyses chlorophyllide a + NADP(+) = protochlorophyllide a + NADPH + H(+). The protein operates within porphyrin-containing compound metabolism; chlorophyll biosynthesis. Its function is as follows. Phototransformation of protochlorophyllide (Pchlide) to chlorophyllide (Chlide). This Pisum sativum (Garden pea) protein is Protochlorophyllide reductase, chloroplastic (3PCR).